Consider the following 234-residue polypeptide: Sugar fermentation stimulation protein A (234 aa).

The H-T-H motif DNA-binding region spans 201–220 (LLSEAQNKGVEVLAYKAELS).

This sequence belongs to the SfsA family.

Functionally, binds to DNA non-specifically. Could be a regulatory factor involved in maltose metabolism. This is Sugar fermentation stimulation protein A from Salmonella dublin (strain CT_02021853).